The sequence spans 120 residues: Seripauperin-13 (120 aa).

The N-terminal stretch at 1 to 25 (MVKLTSIAAGVAAIAATASATTTLA) is a signal peptide.

It belongs to the SRP1/TIP1 family. Seripauperin subfamily.

The chain is Seripauperin-13 (PAU13) from Saccharomyces cerevisiae (strain ATCC 204508 / S288c) (Baker's yeast).